Reading from the N-terminus, the 401-residue chain is MTDFQFSKVEDAIEAIRQGKIILVTDDEDRENEGDFICAAEFATPENINFMATYGKGLICTPISTEIAKKLNFHPMVAVNQDNHETAFTVSVDHIDTGTGISAFERSITAMKIVDDNAKATDFRRPGHMFPLIAKEGGVLVRNGHTEATVDLARLAGLKHAGLCCEIMADDGTMMTMPDLQKFAVEHNMPFITIQQLQEYRRKHDSLVKQISVVKMPTKYGEFMAHSFVEVISGKEHVALVKGDLTDGEQVLARIHSECLTGDAFGSQRCDCGQQFAAAMTQIEQEGRGVILYLRQEGRGIGLINKLRAYELQDKGMDTVEANVALGFKEDEREYYIGAQMFQQLGVKSIRLLTNNPAKIEGLKEQGLNIVAREPIIVEPNKNDIDYLKVKQIKMGHMFNF.

The DHBP synthase stretch occupies residues Met1–Lys203. D-ribulose 5-phosphate is bound by residues Arg30–Glu31, Asp35, Arg142–Thr146, and Glu166. Residue Glu31 coordinates Mg(2+). His145 is a binding site for Mg(2+). A GTP cyclohydrolase II region spans residues His204–Phe401. Arg254–Glu258 is a GTP binding site. Positions 259, 270, and 272 each coordinate Zn(2+). GTP-binding positions include Gln275, Glu297 to Arg299, and Thr319. Asp331 (proton acceptor; for GTP cyclohydrolase activity) is an active-site residue. Arg333 functions as the Nucleophile; for GTP cyclohydrolase activity in the catalytic mechanism. 2 residues coordinate GTP: Thr354 and Lys359.

The protein in the N-terminal section; belongs to the DHBP synthase family. It in the C-terminal section; belongs to the GTP cyclohydrolase II family. It depends on Mg(2+) as a cofactor. The cofactor is Mn(2+). Requires Zn(2+) as cofactor.

The catalysed reaction is D-ribulose 5-phosphate = (2S)-2-hydroxy-3-oxobutyl phosphate + formate + H(+). It carries out the reaction GTP + 4 H2O = 2,5-diamino-6-hydroxy-4-(5-phosphoribosylamino)-pyrimidine + formate + 2 phosphate + 3 H(+). The protein operates within cofactor biosynthesis; riboflavin biosynthesis; 2-hydroxy-3-oxobutyl phosphate from D-ribulose 5-phosphate: step 1/1. Its pathway is cofactor biosynthesis; riboflavin biosynthesis; 5-amino-6-(D-ribitylamino)uracil from GTP: step 1/4. In terms of biological role, catalyzes the conversion of D-ribulose 5-phosphate to formate and 3,4-dihydroxy-2-butanone 4-phosphate. Its function is as follows. Catalyzes the conversion of GTP to 2,5-diamino-6-ribosylamino-4(3H)-pyrimidinone 5'-phosphate (DARP), formate and pyrophosphate. The sequence is that of Riboflavin biosynthesis protein RibBA from Actinobacillus pleuropneumoniae serotype 5b (strain L20).